Here is a 92-residue protein sequence, read N- to C-terminus: MIAMARILAIYRVLLDGSISSDEAIQRIRKELEDKGFKLEGYDENPIGFGIVALNLKITAPEEDGITDAISSVLEELEGVSSVELDMVSRVG.

It belongs to the EF-1-beta/EF-1-delta family.

In terms of biological role, promotes the exchange of GDP for GTP in EF-1-alpha/GDP, thus allowing the regeneration of EF-1-alpha/GTP that could then be used to form the ternary complex EF-1-alpha/GTP/AAtRNA. The chain is Elongation factor 1-beta from Korarchaeum cryptofilum (strain OPF8).